The sequence spans 352 residues: Phosphoribosylformylglycinamidine cyclo-ligase (352 aa).

Belongs to the AIR synthase family.

Its subcellular location is the cytoplasm. It carries out the reaction 2-formamido-N(1)-(5-O-phospho-beta-D-ribosyl)acetamidine + ATP = 5-amino-1-(5-phospho-beta-D-ribosyl)imidazole + ADP + phosphate + H(+). Its pathway is purine metabolism; IMP biosynthesis via de novo pathway; 5-amino-1-(5-phospho-D-ribosyl)imidazole from N(2)-formyl-N(1)-(5-phospho-D-ribosyl)glycinamide: step 2/2. The protein is Phosphoribosylformylglycinamidine cyclo-ligase of Teredinibacter turnerae (strain ATCC 39867 / T7901).